The chain runs to 76 residues: Potassium/proton antiporter CemA (76 aa).

A helical membrane pass occupies residues 35–52 (QILSCLVSIFPVILDTIF).

The protein belongs to the CemA family.

Its subcellular location is the plastid. It is found in the chloroplast inner membrane. It catalyses the reaction K(+)(in) + H(+)(out) = K(+)(out) + H(+)(in). Functionally, contributes to K(+)/H(+) antiport activity by supporting proton efflux to control proton extrusion and homeostasis in chloroplasts in a light-dependent manner to modulate photosynthesis. Prevents excessive induction of non-photochemical quenching (NPQ) under continuous-light conditions. Indirectly promotes efficient inorganic carbon uptake into chloroplasts. This is Potassium/proton antiporter CemA from Vicia faba (Broad bean).